The primary structure comprises 300 residues: F-box protein PP2-A15 (300 aa).

One can recognise an F-box domain in the interval 17–63; it reads MGPGLGDIPESCVACVFMYLTPPEICNLAGLNRSFRGAASSDSVWEK.

The polypeptide is F-box protein PP2-A15 (PP2A15) (Arabidopsis thaliana (Mouse-ear cress)).